We begin with the raw amino-acid sequence, 84 residues long: Small ribosomal subunit protein bS20 (84 aa).

Belongs to the bacterial ribosomal protein bS20 family.

Binds directly to 16S ribosomal RNA. The polypeptide is Small ribosomal subunit protein bS20 (Azobacteroides pseudotrichonymphae genomovar. CFP2).